The following is a 256-amino-acid chain: MKPAIVILCLFVASLYAADSDVPNDILEEQLYNSVVVADYDSAVEKSKHLYEEKKSEVITNVVNKLIRNNKMNCMEYAYQLWLQGSKDIVRDCFPVEFRLIFAENAIKLMYKRDGLALTLSNDVQGDDGRPAYGDGKDKTSPRVSWKLIALWENNKVYFKILNTERNQYLVLGVGTNWNGDHMAFGVNSVDSFRAQWYLQPAKYDNDVLFYIYNREYSKALTLSRTVEPSGHRMAWGYNGRVIGSPEHYAWGIKAF.

The N-terminal stretch at 1–17 (MKPAIVILCLFVASLYA) is a signal peptide.

The protein belongs to the 30 kDa lipoprotein family. Detected in larval hemolymph (at protein level).

It is found in the secreted. In Bombyx mori (Silk moth), this protein is Low molecular mass lipoprotein 3.